The sequence spans 561 residues: Putative pectinesterase/pectinesterase inhibitor 24 (561 aa).

A helical transmembrane segment spans residues 26-46 (IAIIAVSLVILAGIVIGAVFG). The pectinesterase inhibitor 24 stretch occupies residues 64-211 (DSISVSVKAV…TELTSNALAI (148 aa)). Asparagine 92, asparagine 130, asparagine 148, and asparagine 200 each carry an N-linked (GlcNAc...) asparagine glycan. The segment at 255–548 (DIVVAKDGSG…TVKPFIDGGR (294 aa)) is pectinesterase 24. Residues threonine 330 and glutamine 360 each coordinate substrate. Aspartate 383 (proton donor; for pectinesterase activity) is an active-site residue. Cysteine 397 and cysteine 417 are oxidised to a cystine. Catalysis depends on aspartate 404, which acts as the Nucleophile; for pectinesterase activity. Substrate-binding residues include arginine 468 and tryptophan 470. N-linked (GlcNAc...) asparagine glycosylation occurs at asparagine 472.

In the N-terminal section; belongs to the PMEI family. It in the C-terminal section; belongs to the pectinesterase family.

It is found in the membrane. The catalysed reaction is [(1-&gt;4)-alpha-D-galacturonosyl methyl ester](n) + n H2O = [(1-&gt;4)-alpha-D-galacturonosyl](n) + n methanol + n H(+). The protein operates within glycan metabolism; pectin degradation; 2-dehydro-3-deoxy-D-gluconate from pectin: step 1/5. In terms of biological role, acts in the modification of cell walls via demethylesterification of cell wall pectin. The protein is Putative pectinesterase/pectinesterase inhibitor 24 (PME24) of Arabidopsis thaliana (Mouse-ear cress).